A 256-amino-acid polypeptide reads, in one-letter code: DNA repair protein RecO (256 aa).

Belongs to the RecO family.

Involved in DNA repair and RecF pathway recombination. The protein is DNA repair protein RecO of Anaeromyxobacter sp. (strain Fw109-5).